A 115-amino-acid polypeptide reads, in one-letter code: Large ribosomal subunit protein P2 (115 aa).

Met-1 carries the post-translational modification N-acetylmethionine. At Ser-19 the chain carries Phosphoserine. An N6-acetyllysine; alternate modification is found at Lys-21. Lys-21 bears the N6-succinyllysine; alternate mark. Residues Ala-76–Ala-90 show a composition bias toward low complexity. Positions Ala-76–Asp-115 are disordered. Phosphoserine is present on residues Ser-79 and Ser-86. The span at Ala-91–Glu-101 shows a compositional bias: basic and acidic residues. 2 positions are modified to phosphoserine: Ser-102 and Ser-105.

This sequence belongs to the eukaryotic ribosomal protein P1/P2 family. As to quaternary structure, heterodimer with RPLP1 at the lateral ribosomal stalk of the large ribosomal subunit.

Plays an important role in the elongation step of protein synthesis. The protein is Large ribosomal subunit protein P2 (Rplp2) of Rattus norvegicus (Rat).